The chain runs to 448 residues: MGKFLQLLSHPIELKAVIQLFGFRQPLHPGKRDVNDKELVRCYELLNLTSRSFAAVIEELHPELRDAVMIFYLVLRALDTIEDDMTIKSSIKIPLLREFDTKLNTKNWTFDGNGPNEKDRTVLVEFDKILNVYHRLKPQYQDIIKSITFKMGNGMADYILDEEFNVNGVATVEDYNLYCHYVAGLVGEGLTNLFVLANFGDKTLTENNFAKADSMGLFLQKTNIIRDYHEDLQDGRSFWPREIWSKYTENLQDFHKVKTPAKEFAGVSCINELVLNALGHVTDCLDYLSLVKDPSSFSFCAIPQVMAVATLAEVYNNPKVLHGVVKIRKGTTCRLILESRTLPGVVKIFKEYIQVINHKSSVRDPNYLKIGIKCGEIEQYCEMIYPNKQALPPSMKSLPENKFTKIVASRESIDLSVQRRIEQENFNCNVVLFGIGALILSLIYFVLY.

The chain crosses the membrane as a helical span at residues 428–448 (CNVVLFGIGALILSLIYFVLY).

The protein belongs to the phytoene/squalene synthase family. Requires Mg(2+) as cofactor.

The protein resides in the endoplasmic reticulum membrane. It localises to the microsome. It catalyses the reaction 2 (2E,6E)-farnesyl diphosphate + NADPH + H(+) = squalene + 2 diphosphate + NADP(+). The catalysed reaction is 2 (2E,6E)-farnesyl diphosphate + NADH + H(+) = squalene + 2 diphosphate + NAD(+). The protein operates within terpene metabolism; lanosterol biosynthesis; lanosterol from farnesyl diphosphate: step 1/3. In terms of biological role, squalene synthase; part of the third module of ergosterol biosynthesis pathway that includes the late steps of the pathway. ERG9 produces squalene from 2 farnesyl pyrophosphate moieties. The third module or late pathway involves the ergosterol synthesis itself through consecutive reactions that mainly occur in the endoplasmic reticulum (ER) membrane. Firstly, the squalene synthase ERG9 catalyzes the condensation of 2 farnesyl pyrophosphate moieties to form squalene, which is the precursor of all steroids. Squalene synthase is crucial for balancing the incorporation of farnesyl diphosphate (FPP) into sterol and nonsterol isoprene synthesis. Secondly, the squalene epoxidase ERG1 catalyzes the stereospecific oxidation of squalene to (S)-2,3-epoxysqualene, which is considered to be a rate-limiting enzyme in steroid biosynthesis. Then, the lanosterol synthase ERG7 catalyzes the cyclization of (S)-2,3 oxidosqualene to lanosterol, a reaction that forms the sterol core. In the next steps, lanosterol is transformed to zymosterol through a complex process involving various demethylation, reduction and desaturation reactions. The lanosterol 14-alpha-demethylase ERG11 (also known as CYP51) catalyzes C14-demethylation of lanosterol to produce 4,4'-dimethyl cholesta-8,14,24-triene-3-beta-ol, which is critical for ergosterol biosynthesis. The C-14 reductase ERG24 reduces the C14=C15 double bond of 4,4-dimethyl-cholesta-8,14,24-trienol to produce 4,4-dimethyl-cholesta-8,24-dienol. 4,4-dimethyl-cholesta-8,24-dienol is substrate of the C-4 demethylation complex ERG25-ERG26-ERG27 in which ERG25 catalyzes the three-step monooxygenation required for the demethylation of 4,4-dimethyl and 4alpha-methylsterols, ERG26 catalyzes the oxidative decarboxylation that results in a reduction of the 3-beta-hydroxy group at the C-3 carbon to an oxo group, and ERG27 is responsible for the reduction of the keto group on the C-3. ERG28 has a role as a scaffold to help anchor ERG25, ERG26 and ERG27 to the endoplasmic reticulum and ERG29 regulates the activity of the iron-containing C4-methylsterol oxidase ERG25. Then, the sterol 24-C-methyltransferase ERG6 catalyzes the methyl transfer from S-adenosyl-methionine to the C-24 of zymosterol to form fecosterol. The C-8 sterol isomerase ERG2 catalyzes the reaction which results in unsaturation at C-7 in the B ring of sterols and thus converts fecosterol to episterol. The sterol-C5-desaturase ERG3 then catalyzes the introduction of a C-5 double bond in the B ring to produce 5-dehydroepisterol. The C-22 sterol desaturase ERG5 further converts 5-dehydroepisterol into ergosta-5,7,22,24(28)-tetraen-3beta-ol by forming the C-22(23) double bond in the sterol side chain. Finally, ergosta-5,7,22,24(28)-tetraen-3beta-ol is substrate of the C-24(28) sterol reductase ERG4 to produce ergosterol. The polypeptide is Squalene synthase ERG9 (Candida albicans (strain SC5314 / ATCC MYA-2876) (Yeast)).